Reading from the N-terminus, the 72-residue chain is Translation initiation factor IF-1 (72 aa).

One can recognise an S1-like domain in the interval 1–72 (MAKEDSIEMQ…TKGRIIFRAR (72 aa)).

It belongs to the IF-1 family. As to quaternary structure, component of the 30S ribosomal translation pre-initiation complex which assembles on the 30S ribosome in the order IF-2 and IF-3, IF-1 and N-formylmethionyl-tRNA(fMet); mRNA recruitment can occur at any time during PIC assembly.

The protein resides in the cytoplasm. Functionally, one of the essential components for the initiation of protein synthesis. Stabilizes the binding of IF-2 and IF-3 on the 30S subunit to which N-formylmethionyl-tRNA(fMet) subsequently binds. Helps modulate mRNA selection, yielding the 30S pre-initiation complex (PIC). Upon addition of the 50S ribosomal subunit IF-1, IF-2 and IF-3 are released leaving the mature 70S translation initiation complex. This Actinobacillus succinogenes (strain ATCC 55618 / DSM 22257 / CCUG 43843 / 130Z) protein is Translation initiation factor IF-1.